Reading from the N-terminus, the 229-residue chain is Flagellar L-ring protein (229 aa).

The signal sequence occupies residues 1–20 (MLKTVLRLPVCAALLALAAG). Cysteine 21 carries N-palmitoyl cysteine lipidation. The S-diacylglycerol cysteine moiety is linked to residue cysteine 21.

Belongs to the FlgH family. The basal body constitutes a major portion of the flagellar organelle and consists of four rings (L,P,S, and M) mounted on a central rod.

The protein localises to the cell outer membrane. Its subcellular location is the bacterial flagellum basal body. Functionally, assembles around the rod to form the L-ring and probably protects the motor/basal body from shearing forces during rotation. The polypeptide is Flagellar L-ring protein (Bordetella pertussis (strain Tohama I / ATCC BAA-589 / NCTC 13251)).